The primary structure comprises 692 residues: Proprotein convertase subtilisin/kexin type 9 (692 aa).

The first 30 residues, 1–30 (MGTVSSRRSWWPLPLPLLLLLLLGPAGARA), serve as a signal peptide directing secretion. Positions 31 to 152 (QEDEDGDYEE…IEEDSSVFAQ (122 aa)) are excised as a propeptide. Sulfotyrosine is present on Tyr38. At Ser47 the chain carries Phosphoserine. Residues 77-149 (TYVVVLKEET…VDYIEEDSSV (73 aa)) enclose the Inhibitor I9 domain. Residues 155 to 444 (PWNLERITPA…VLTPNLVAAL (290 aa)) enclose the Peptidase S8 domain. Active-site charge relay system residues include Asp186 and His226. Intrachain disulfides connect Cys223–Cys255 and Cys323–Cys358. Residue Ser386 is the Charge relay system of the active site. Residues 450 to 692 (RAGWQLFCRT…HLVQASQELQ (243 aa)) are C-terminal domain. 3 disulfide bridges follow: Cys457–Cys527, Cys477–Cys526, and Cys486–Cys509. Residue Asn533 is glycosylated (N-linked (GlcNAc...) asparagine). Intrachain disulfides connect Cys534-Cys601, Cys552-Cys600, Cys562-Cys588, Cys608-Cys679, Cys626-Cys678, and Cys635-Cys654. Ser688 carries the phosphoserine modification.

It belongs to the peptidase S8 family. In terms of assembly, monomer. Can self-associate to form dimers and higher multimers which may have increased LDLR degrading activity. The precursor protein but not the mature protein may form multimers. Interacts with APOB, VLDLR, LRP8/APOER2 and BACE1. The full-length immature form (pro-PCSK9) interacts with SCNN1A, SCNN1B and SCNN1G. The pro-PCSK9 form (via C-terminal domain) interacts with LDLR. Interacts (via the C-terminal domain) with ANXA2 (via repeat Annexin 1); the interaction inhibits the degradation of LDLR. It depends on Ca(2+) as a cofactor. Cleavage by furin and PCSK5 generates a truncated inactive protein that is unable to induce LDLR degradation. In terms of processing, undergoes autocatalytic cleavage in the endoplasmic reticulum to release the propeptide from the N-terminus and the cleavage of the propeptide is strictly required for its maturation and activation. The cleaved propeptide however remains associated with the catalytic domain through non-covalent interactions, preventing potential substrates from accessing its active site. As a result, it is secreted from cells as a propeptide-containing, enzymatically inactive protein. Post-translationally, phosphorylation protects the propeptide against proteolysis.

The protein resides in the cytoplasm. It localises to the secreted. Its subcellular location is the endosome. The protein localises to the lysosome. It is found in the cell surface. The protein resides in the endoplasmic reticulum. It localises to the golgi apparatus. Its proteolytic activity is autoinhibited by the non-covalent binding of the propeptide to the catalytic domain. Inhibited by EGTA. Crucial player in the regulation of plasma cholesterol homeostasis. Binds to low-density lipid receptor family members: low density lipoprotein receptor (LDLR), very low density lipoprotein receptor (VLDLR), apolipoprotein E receptor (LRP1/APOER) and apolipoprotein receptor 2 (LRP8/APOER2), and promotes their degradation in intracellular acidic compartments. Acts via a non-proteolytic mechanism to enhance the degradation of the hepatic LDLR through a clathrin LDLRAP1/ARH-mediated pathway. May prevent the recycling of LDLR from endosomes to the cell surface or direct it to lysosomes for degradation. Can induce ubiquitination of LDLR leading to its subsequent degradation. Inhibits intracellular degradation of APOB via the autophagosome/lysosome pathway in a LDLR-independent manner. Involved in the disposal of non-acetylated intermediates of BACE1 in the early secretory pathway. Inhibits epithelial Na(+) channel (ENaC)-mediated Na(+) absorption by reducing ENaC surface expression primarily by increasing its proteasomal degradation. Regulates neuronal apoptosis via modulation of LRP8/APOER2 levels and related anti-apoptotic signaling pathways. In Macaca mulatta (Rhesus macaque), this protein is Proprotein convertase subtilisin/kexin type 9 (PCSK9).